The chain runs to 341 residues: Phosphate acyltransferase (341 aa).

It belongs to the PlsX family. Homodimer. Probably interacts with PlsY.

Its subcellular location is the cytoplasm. It carries out the reaction a fatty acyl-[ACP] + phosphate = an acyl phosphate + holo-[ACP]. Its pathway is lipid metabolism; phospholipid metabolism. In terms of biological role, catalyzes the reversible formation of acyl-phosphate (acyl-PO(4)) from acyl-[acyl-carrier-protein] (acyl-ACP). This enzyme utilizes acyl-ACP as fatty acyl donor, but not acyl-CoA. This chain is Phosphate acyltransferase, found in Vibrio parahaemolyticus serotype O3:K6 (strain RIMD 2210633).